The chain runs to 546 residues: Smad protein daf-8 (546 aa).

The MH1 domain occupies 16-137 (AMAQKVLEET…YRWVELPTCQ (122 aa)). Disordered regions lie at residues 234-268 (LQQS…FIPN) and 292-317 (ENFS…PIEP). A compositionally biased stretch (polar residues) spans 292-302 (ENFSSENNGNR). The MH2 domain maps to 349-546 (WLKLIYYEEG…APPRICSSRT (198 aa)).

The protein belongs to the dwarfin/SMAD family. In terms of assembly, homodimer. Interacts with R-SMAD daf-14 and co-SMAD daf-3. Interacts with orphan nuclear receptor nhr-69. In terms of tissue distribution, expressed in the excretory cell and gonadal distal tip cells (DTCs).

It is found in the cytoplasm. The protein localises to the nucleus. In terms of biological role, probably a receptor-regulated SMAD (R-SMAD) that is an intracellular signal transducer and transcriptional modulator activated by TGF-beta-like daf-7 signaling. Plays a role in TGF-beta-like daf-7 signaling in regulating entry into a developmentally arrested larval state known as dauer, in response to harsh environmental conditions; partially redundant with R-SMAD daf-14. Plays a role in inhibiting mitosis and promoting a switch to meiosis in the germ line, perhaps by down-regulating lag-2 transcription in the gonadal distal tip cells (DTCs). In cooperation with orphan nuclear receptor nhr-69 modulates the Insulin/IGF-1-like signaling (IIS) pathway, perhaps by regulating expression of the potassium channel exp-2, which in turn modulates the secretion of the insulin-like peptide daf-28. This is Smad protein daf-8 from Caenorhabditis elegans.